We begin with the raw amino-acid sequence, 145 residues long: Ribonuclease H (145 aa).

The RNase H type-1 domain occupies Met1–Ala141. Residues Asp9, Glu47, Asp69, and Asp133 each coordinate Mg(2+).

This sequence belongs to the RNase H family. As to quaternary structure, monomer. Requires Mg(2+) as cofactor.

The protein resides in the cytoplasm. It catalyses the reaction Endonucleolytic cleavage to 5'-phosphomonoester.. Its function is as follows. Endonuclease that specifically degrades the RNA of RNA-DNA hybrids. This chain is Ribonuclease H, found in Cupriavidus metallidurans (strain ATCC 43123 / DSM 2839 / NBRC 102507 / CH34) (Ralstonia metallidurans).